We begin with the raw amino-acid sequence, 124 residues long: Large ribosomal subunit protein bL12 (124 aa).

The protein belongs to the bacterial ribosomal protein bL12 family. As to quaternary structure, homodimer. Part of the ribosomal stalk of the 50S ribosomal subunit. Forms a multimeric L10(L12)X complex, where L10 forms an elongated spine to which 2 to 4 L12 dimers bind in a sequential fashion. Binds GTP-bound translation factors.

Functionally, forms part of the ribosomal stalk which helps the ribosome interact with GTP-bound translation factors. Is thus essential for accurate translation. This is Large ribosomal subunit protein bL12 from Bacteroides thetaiotaomicron (strain ATCC 29148 / DSM 2079 / JCM 5827 / CCUG 10774 / NCTC 10582 / VPI-5482 / E50).